The sequence spans 155 residues: Secreted RxLR effector protein RXLR-C301 (155 aa).

A signal peptide spans M1–A24. The RxLR-dEER motif lies at R34 to R64.

The protein belongs to the RxLR effector family.

It is found in the secreted. The protein localises to the host cell membrane. Its function is as follows. Secreted effector that does not suppress pattern-triggered immunity (PTI) in plant host. This Plasmopara halstedii (Downy mildew of sunflower) protein is Secreted RxLR effector protein RXLR-C301.